A 405-amino-acid chain; its full sequence is Histone deacetylase clr6 (405 aa).

The tract at residues 6-318 (KKVSYFYDED…WTYETGLLAG (313 aa)) is histone deacetylase. Histidine 138 is a catalytic residue.

The protein belongs to the histone deacetylase family. HD type 1 subfamily. As to quaternary structure, heterotetramer of alp13, clr6, prw1 and pst2.

The protein resides in the nucleus. It carries out the reaction N(6)-acetyl-L-lysyl-[histone] + H2O = L-lysyl-[histone] + acetate. Responsible for the deacetylation of lysine residues on the N-terminal part of the core histones (H2A, H2B, H3 and H4). Histone deacetylation gives a tag for epigenetic repression and plays an important role in transcriptional regulation, cell cycle progression and developmental events. Histone deacetylases act via the formation of large multiprotein complexes. Has a role in chromatin assembly and chromosome segregation. The sequence is that of Histone deacetylase clr6 (clr6) from Schizosaccharomyces pombe (strain 972 / ATCC 24843) (Fission yeast).